The chain runs to 1179 residues: DNA-directed RNA polymerase subunit beta (1179 aa).

Over residues 1153–1162 (MREMEDEDEG) the composition is skewed to acidic residues. Residues 1153–1179 (MREMEDEDEGNGEKLNLVLEGGSLNEE) are disordered.

The protein belongs to the RNA polymerase beta chain family. The RNAP catalytic core consists of 2 alpha, 1 beta, 1 beta' and 1 omega subunit. When a sigma factor is associated with the core the holoenzyme is formed, which can initiate transcription.

It carries out the reaction RNA(n) + a ribonucleoside 5'-triphosphate = RNA(n+1) + diphosphate. In terms of biological role, DNA-dependent RNA polymerase catalyzes the transcription of DNA into RNA using the four ribonucleoside triphosphates as substrates. The protein is DNA-directed RNA polymerase subunit beta of Brevibacillus brevis (strain 47 / JCM 6285 / NBRC 100599).